We begin with the raw amino-acid sequence, 429 residues long: Histidine--tRNA ligase (429 aa).

It belongs to the class-II aminoacyl-tRNA synthetase family. Homodimer.

The protein resides in the cytoplasm. It carries out the reaction tRNA(His) + L-histidine + ATP = L-histidyl-tRNA(His) + AMP + diphosphate + H(+). The protein is Histidine--tRNA ligase of Desulfotalea psychrophila (strain LSv54 / DSM 12343).